We begin with the raw amino-acid sequence, 1209 residues long: Protein phosphatase 1 regulatory subunit 26 (1209 aa).

9 disordered regions span residues 57 to 91, 145 to 279, 291 to 471, 501 to 532, 555 to 694, 733 to 836, 848 to 1033, 1052 to 1072, and 1118 to 1209; these read DGAA…TVHK, SGAA…HRQG, KPPR…VERS, GSDG…DSDD, GESC…EDLD, EQLG…SNDS, KAKE…FAHQ, RGGV…GLPS, and AFRE…VVKV. The segment covering 63–91 has biased composition (basic and acidic residues); the sequence is TSDERAAQRGHRAEGCHDARPAAKPTVHK. Positions 201–219 are enriched in low complexity; the sequence is QVGSSKDQGSASPVSVSSD. A compositionally biased stretch (basic and acidic residues) spans 226–255; sequence IRAEIEQFLNEKRQHETQKCDGSVEKKPDT. Positions 301 to 321 are enriched in polar residues; sequence QPRSLRSKVTTTQENEGSTKP. Residues 352-362 are compositionally biased toward low complexity; the sequence is SAAQASEASDS. The span at 442-454 shows a compositional bias: basic and acidic residues; it reads DTDHAPKLLKETK. 3 stretches are compositionally biased toward basic and acidic residues: residues 609-637, 667-685, and 757-766; these read KMQE…RRDL, KTDE…DKSS, and SKRDSGEGPG. 2 stretches are compositionally biased toward low complexity: residues 821–836 and 852–861; these read PGSL…SNDS and SVSSSEVQAE. Serine 1161 carries the phosphoserine modification. Residues 1187 to 1209 show a composition bias toward low complexity; sequence GSDASDFSDTSTEDSGGSSVVKV.

In terms of assembly, interacts with UTP20 and PPP1CA. As to expression, ubiquitous in normal tissues. Expressed in numerous adenocarcinoma cell lines.

It is found in the nucleus. It localises to the nucleolus. In terms of biological role, inhibits phosphatase activity of protein phosphatase 1 (PP1) complexes. May positively regulate cell proliferation. The chain is Protein phosphatase 1 regulatory subunit 26 (PPP1R26) from Homo sapiens (Human).